We begin with the raw amino-acid sequence, 204 residues long: N-(5'-phosphoribosyl)anthranilate isomerase (204 aa).

This sequence belongs to the TrpF family.

It carries out the reaction N-(5-phospho-beta-D-ribosyl)anthranilate = 1-(2-carboxyphenylamino)-1-deoxy-D-ribulose 5-phosphate. Its pathway is amino-acid biosynthesis; L-tryptophan biosynthesis; L-tryptophan from chorismate: step 3/5. This chain is N-(5'-phosphoribosyl)anthranilate isomerase, found in Syntrophomonas wolfei subsp. wolfei (strain DSM 2245B / Goettingen).